A 1104-amino-acid chain; its full sequence is MSSNNEPAQSRTSYFKLNEFLSNVKHYKNTFKGEIQWCNNLSLNDWKTHYLQITSTGALTHSIDELTADSTNIQPIIKHLQQCRIEIIKDKHSSFKDINANCNFIIQVNTSGKDNKVYLRVKSWSDFKKLLTCLIWWSSMKTNGIFNKFQVSRPLEFKSKKMAKPESLLVYKLNVFGPIVKNIVLPPATNILESPDIINNDDNSVGWFSAMGVLKSNGMLDLLLQSDGSLIYSLNISQLLRSEIRILDSSVLQSENSLFLGELPLLRSQLGLEKFRIENIASAATNSSDISQEIIVEFPLRIDLEDCFIALQSFARSEYLSITGSDKSNDMKISNSFKISILEANFQSINLNDKNNTPWSIFTDITAWGHTWARTSMVSNSSNPFWREEFQFNELLRLTNSYLEIKQLFHDLNNKKRLRLIGKIKITQEIINDTRYNKETRLPIMDVDNKNFQIGTICIKISSNLNFILPSTNFVKLEKLLMNANLSMVSNLIYKSSSSMENDNKLTQTSIIFLDIFQSLSRIEEWFHVLIDKELAKIDGTVSRINQKNLDSKHVFNSLFRGNSILTKSIEQYFFRVGNEYLSKALSAILKEIIESNKSCELDPARVKEKDEVKKRKIIADNYKRLYSWVTKIWKRLYATSNDLPIEIRNVLKIFRQKLEIICIDDTLQIILNGISGLLFLRFFCPVILNPKLFKYVSQNLNETARRNLTLISKVLLNLSTLTQFANKEPWLMKMNNFIDKRHNDLLDYIDKMTQKKLDFNSKILNLSSTISRPKLAIEQTMLDDLPQIPYLLDKNLRETEFVNLIVNFSQEDMTKMEKYNHMDNGGKGELIEEEGLLSGSSLNLSVDKKDLDSPIEVKPEIGELEFEKITENNTEIFGDDLMNLLKSDDVGSRSRDLDNGANSGIKFNSIIPKAEEEKHAMKELEQESCLLYNRINHIRKRLSGYECASSTLFEDKKYSISLSHKIFYEEIKEGKEIVLKLLNKPTNENSSARLQKFFTKGVSSKSNNTVGDSYCKFLTIDVSDENPKSSNKTSVHGTSSENGAKDDYLTLPNSQGKGNLGNRFSPTKLSRIMRKPPNADVPKEQNSRKLTRWFKKKKETGGS.

Serine 2 bears the N-acetylserine mark. The region spanning 316-444 (RSEYLSITGS…RYNKETRLPI (129 aa)) is the C2 domain. The region spanning 536–753 (AKIDGTVSRI…NDLLDYIDKM (218 aa)) is the Ras-GAP domain. Serine 854 carries the post-translational modification Phosphoserine. The disordered stretch occupies residues 1027-1104 (NPKSSNKTSV…FKKKKETGGS (78 aa)). 2 stretches are compositionally biased toward polar residues: residues 1029–1043 (KSSN…SSEN) and 1052–1069 (LPNS…SPTK). A compositionally biased stretch (basic residues) spans 1090–1104 (KLTRWFKKKKETGGS).

Its function is as follows. Stimulates the GTPase activity of BUD1/RSR1. Participates in the regulation of bud-site selection. This Saccharomyces cerevisiae (strain ATCC 204508 / S288c) (Baker's yeast) protein is Inhibitory regulator protein BUD2/CLA2 (BUD2).